The sequence spans 882 residues: MNAETPEGSAAPPSPASTSAKTVTDKTNKKRASPSGDSEQPTKVTKRRAARACVSCRARKVRCDVVEGAPCGNCRWDNVECVVQESRRRKKNLLTASTAGQPVSTEAQLRCKTAASNPMGMSTADLRRPSSGSAISTSSIDGPSSFLSNSGLDNHVPHMIYQRSGYRHDPVLLNKLHSNDGNPQRPVWSNNLMTTPSVFDSLRTFRFISSLEEQDSTAQLPAFLRPLPTKIAAEDVKYLQIKGALSVPTLPLQNALLQAYVEYVHPYMPLMDLNSFLGIINTRDGQNGQTSLFLYQAVMFAASAFVDMKYLREGGYTTRKAARKSFFQKTRLLYDFDYESDRLVLVQALLLMTYWYETPDDQKDTWHWMGVAISLAHTIGLHRNPGSTSMAPAKQKLWKRIWWSCFMRDRLIALGMRRPTRIKDEDFDVPMLEESDFEIEVLADDNTVIPASCTLVRNLDMQRELAIMCISKAQLCVCISHMLKAQYSVLIRDKMKPENTTNSTMMLFPNKQLDNVEGVTEVDHELMAWAESLPTCCQYRTLTPLDVKDGRSTIAVQRTLLHMVYYTTISALHRPQFLPSSPLQAPTTSRQVQDMSRLRVRDAAMHITRMATELHQCRLERFLPTTGVTVILPAMIIHLLEMKNPAPQARERATRGFRQCMRVMEKLREVYAAADYATGFLDAALRKAAIDINASVGPSTLAMMKRVPVEFSAQTPPPENAPYMTAAESLFNERPKEHRPQPTPTMMPPNTVNAAALELSTNSPPQTELEESPAGLTPSVSAASEEIQLDVGNMDLDFMQGHDEFDWNAVAGTDFDVDQWLQFPPEGVTNQDDNLIAGVLGRGVEEPTMSAEQALNWAINAEADATARQPDGRVQGEVPAQA.

A compositionally biased stretch (low complexity) spans 1-20; that stretch reads MNAETPEGSAAPPSPASTSA. The segment at 1–49 is disordered; that stretch reads MNAETPEGSAAPPSPASTSAKTVTDKTNKKRASPSGDSEQPTKVTKRRA. The segment at residues 53–81 is a DNA-binding region (zn(2)-C6 fungal-type); the sequence is CVSCRARKVRCDVVEGAPCGNCRWDNVEC. A disordered region spans residues 117–148; sequence NPMGMSTADLRRPSSGSAISTSSIDGPSSFLS. The segment covering 130–139 has biased composition (low complexity); it reads SSGSAISTSS.

The protein resides in the nucleus. The polypeptide is Cutinase transcription factor 1 beta (CTF1-BETA) (Fusarium vanettenii (Neocosmospora pisi)).